A 332-amino-acid polypeptide reads, in one-letter code: Fructose-1,6-bisphosphatase class 1 (332 aa).

Residues E89, D110, L112, and D113 each contribute to the Mg(2+) site. Residues 113–116 (DGSS), N206, Y239, 257–259 (YLY), and K269 contribute to the substrate site. E275 lines the Mg(2+) pocket.

Belongs to the FBPase class 1 family. In terms of assembly, homotetramer. Mg(2+) is required as a cofactor.

Its subcellular location is the cytoplasm. The catalysed reaction is beta-D-fructose 1,6-bisphosphate + H2O = beta-D-fructose 6-phosphate + phosphate. It participates in carbohydrate biosynthesis; gluconeogenesis. This is Fructose-1,6-bisphosphatase class 1 from Salmonella arizonae (strain ATCC BAA-731 / CDC346-86 / RSK2980).